Consider the following 97-residue polypeptide: ESAT-6-like protein EsxA (97 aa).

Belongs to the WXG100 family. ESAT-6 subfamily. Forms a tight 1:1 complex with EsxB. Forms a complex with EccC and EsxB, probably wholly mediated by EsxB.

The protein resides in the secreted. Functionally, may help regulate assembly and function of the type VII secretion system (T7SS). EsxA disassembles pre-formed EccC-EsxB multimers, possibly by making EccC-EsxA-EsxB trimers instead of EccC-EsxB-EsxB-EccC tetramers. The sequence is that of ESAT-6-like protein EsxA from Thermomonospora curvata (strain ATCC 19995 / DSM 43183 / JCM 3096 / KCTC 9072 / NBRC 15933 / NCIMB 10081 / Henssen B9).